The sequence spans 829 residues: DNA topoisomerase 1 (829 aa).

Positions 1-248 are disordered; sequence MSEDHVQNDS…AKGNEEGVKK (248 aa). Positions 22–36 are enriched in basic residues; that stretch reads HKHKKDKEHRHKEHK. Basic and acidic residues-rich tracts occupy residues 37-58, 68-159, and 193-220; these read KDKDREKSKHNNSEHRDPSEKK, KHRE…EKMK, and KENKAMKRPREDDEDYKPKKIKSEDDKK. 3 interaction with DNA regions span residues 481 to 482, 544 to 549, and 641 to 643; these read KY, RAGNEK, and TAK. One can recognise a Topo IB-type catalytic domain in the interval 488–821; that stretch reads SSRIKGEKDW…SIWQTTTSNF (334 aa). Tyrosine 779 functions as the O-(3'-phospho-DNA)-tyrosine intermediate in the catalytic mechanism.

The protein belongs to the type IB topoisomerase family. Monomer.

Its subcellular location is the nucleus. The catalysed reaction is ATP-independent breakage of single-stranded DNA, followed by passage and rejoining.. Functionally, releases the supercoiling and torsional tension of DNA introduced during the DNA replication and transcription by transiently cleaving and rejoining one strand of the DNA duplex. Introduces a single-strand break via transesterification at a target site in duplex DNA. The scissile phosphodiester is attacked by the catalytic tyrosine of the enzyme, resulting in the formation of a DNA-(3'-phosphotyrosyl)-enzyme intermediate and the expulsion of a 5'-OH DNA strand. TThe free DNA strand then rotates around the intact phosphodiester bond on the opposing strand, thus removing DNA supercoils. Finally, in the religation step, the DNA 5'-OH attacks the covalent intermediate to expel the active-site tyrosine and restore the DNA phosphodiester backbone. May play a role in the circadian transcription of the core circadian clock component BMAL1. In Xenopus laevis (African clawed frog), this protein is DNA topoisomerase 1 (top1).